Here is a 672-residue protein sequence, read N- to C-terminus: DNA ligase (672 aa).

NAD(+)-binding positions include 30–34 (DAVYD), 79–80 (SL), and Glu-110. Lys-112 functions as the N6-AMP-lysine intermediate in the catalytic mechanism. 4 residues coordinate NAD(+): Arg-133, Glu-170, Lys-287, and Lys-311. Residues Cys-405, Cys-408, Cys-423, and Cys-429 each coordinate Zn(2+). A BRCT domain is found at 590-672 (ADELPLSGKT…IALLTEHGAI (83 aa)).

It belongs to the NAD-dependent DNA ligase family. LigA subfamily. It depends on Mg(2+) as a cofactor. Mn(2+) serves as cofactor.

It catalyses the reaction NAD(+) + (deoxyribonucleotide)n-3'-hydroxyl + 5'-phospho-(deoxyribonucleotide)m = (deoxyribonucleotide)n+m + AMP + beta-nicotinamide D-nucleotide.. Functionally, DNA ligase that catalyzes the formation of phosphodiester linkages between 5'-phosphoryl and 3'-hydroxyl groups in double-stranded DNA using NAD as a coenzyme and as the energy source for the reaction. It is essential for DNA replication and repair of damaged DNA. The protein is DNA ligase of Marinomonas sp. (strain MWYL1).